A 198-amino-acid polypeptide reads, in one-letter code: NADH-quinone oxidoreductase subunit B 1 (198 aa).

[4Fe-4S] cluster is bound by residues cysteine 77, cysteine 78, cysteine 142, and cysteine 172.

Belongs to the complex I 20 kDa subunit family. In terms of assembly, NDH-1 is composed of 14 different subunits. Subunits NuoB, C, D, E, F, and G constitute the peripheral sector of the complex. [4Fe-4S] cluster is required as a cofactor.

The protein resides in the cell inner membrane. The catalysed reaction is a quinone + NADH + 5 H(+)(in) = a quinol + NAD(+) + 4 H(+)(out). NDH-1 shuttles electrons from NADH, via FMN and iron-sulfur (Fe-S) centers, to quinones in the respiratory chain. The immediate electron acceptor for the enzyme in this species is believed to be ubiquinone. Couples the redox reaction to proton translocation (for every two electrons transferred, four hydrogen ions are translocated across the cytoplasmic membrane), and thus conserves the redox energy in a proton gradient. This chain is NADH-quinone oxidoreductase subunit B 1, found in Rhodopseudomonas palustris (strain ATCC BAA-98 / CGA009).